Here is a 202-residue protein sequence, read N- to C-terminus: Small ribosomal subunit protein uS4c (202 aa).

Positions 90–152 (MRLDNLIFRL…AASKSLVNTY (63 aa)) constitute an S4 RNA-binding domain.

This sequence belongs to the universal ribosomal protein uS4 family. In terms of assembly, part of the 30S ribosomal subunit. Contacts protein S5. The interaction surface between S4 and S5 is involved in control of translational fidelity.

Its subcellular location is the plastid. The protein localises to the chloroplast. Functionally, one of the primary rRNA binding proteins, it binds directly to 16S rRNA where it nucleates assembly of the body of the 30S subunit. With S5 and S12 plays an important role in translational accuracy. This Emiliania huxleyi (Coccolithophore) protein is Small ribosomal subunit protein uS4c (rps4).